The chain runs to 369 residues: Anhydro-N-acetylmuramic acid kinase (369 aa).

Position 12–19 (12–19 (GTSMDGVD)) interacts with ATP.

It belongs to the anhydro-N-acetylmuramic acid kinase family.

The enzyme catalyses 1,6-anhydro-N-acetyl-beta-muramate + ATP + H2O = N-acetyl-D-muramate 6-phosphate + ADP + H(+). Its pathway is amino-sugar metabolism; 1,6-anhydro-N-acetylmuramate degradation. It participates in cell wall biogenesis; peptidoglycan recycling. Catalyzes the specific phosphorylation of 1,6-anhydro-N-acetylmuramic acid (anhMurNAc) with the simultaneous cleavage of the 1,6-anhydro ring, generating MurNAc-6-P. Is required for the utilization of anhMurNAc either imported from the medium or derived from its own cell wall murein, and thus plays a role in cell wall recycling. The polypeptide is Anhydro-N-acetylmuramic acid kinase (Shewanella sp. (strain MR-4)).